The primary structure comprises 133 residues: Large ribosomal subunit protein bL12 (133 aa).

This sequence belongs to the bacterial ribosomal protein bL12 family. As to quaternary structure, homodimer. Part of the ribosomal stalk of the 50S ribosomal subunit. Forms a multimeric L10(L12)X complex, where L10 forms an elongated spine to which 2 to 4 L12 dimers bind in a sequential fashion. Binds GTP-bound translation factors.

Functionally, forms part of the ribosomal stalk which helps the ribosome interact with GTP-bound translation factors. Is thus essential for accurate translation. In Trichodesmium erythraeum (strain IMS101), this protein is Large ribosomal subunit protein bL12.